The primary structure comprises 141 residues: Large ribosomal subunit protein uL11 (141 aa).

Belongs to the universal ribosomal protein uL11 family. Part of the ribosomal stalk of the 50S ribosomal subunit. Interacts with L10 and the large rRNA to form the base of the stalk. L10 forms an elongated spine to which L12 dimers bind in a sequential fashion forming a multimeric L10(L12)X complex. Post-translationally, one or more lysine residues are methylated.

Forms part of the ribosomal stalk which helps the ribosome interact with GTP-bound translation factors. The polypeptide is Large ribosomal subunit protein uL11 (Streptococcus thermophilus (strain CNRZ 1066)).